A 322-amino-acid polypeptide reads, in one-letter code: Formimidoylglutamase (322 aa).

Residues histidine 130, aspartate 156, histidine 158, aspartate 160, cysteine 245, and aspartate 247 each coordinate Mn(2+).

The protein belongs to the arginase family. Mn(2+) serves as cofactor.

It catalyses the reaction N-formimidoyl-L-glutamate + H2O = formamide + L-glutamate. Its pathway is amino-acid degradation; L-histidine degradation into L-glutamate; L-glutamate from N-formimidoyl-L-glutamate (hydrolase route): step 1/1. Its function is as follows. Catalyzes the conversion of N-formimidoyl-L-glutamate to L-glutamate and formamide. The sequence is that of Formimidoylglutamase from Lysinibacillus sphaericus (strain C3-41).